The following is a 177-amino-acid chain: Large ribosomal subunit protein bL9 (177 aa).

Residues 151–177 (EDEEIAEAAPVAEAQAEADGHSTEETA) form a disordered region. A compositionally biased stretch (low complexity) spans 157-167 (EAAPVAEAQAE). A compositionally biased stretch (basic and acidic residues) spans 168-177 (ADGHSTEETA).

It belongs to the bacterial ribosomal protein bL9 family.

Binds to the 23S rRNA. In Solidesulfovibrio magneticus (strain ATCC 700980 / DSM 13731 / RS-1) (Desulfovibrio magneticus), this protein is Large ribosomal subunit protein bL9.